A 260-amino-acid chain; its full sequence is Proline-rich protein 33 (260 aa).

The disordered stretch occupies residues 29 to 132; that stretch reads GVQTVSPRPE…KVAPKPSRSG (104 aa). The segment covering 73–83 has biased composition (pro residues); that stretch reads GPSPYSPPPAA.

The sequence is that of Proline-rich protein 33 (Prr33) from Mus musculus (Mouse).